Consider the following 139-residue polypeptide: GSK3B-interacting protein (139 aa).

The segment at 41-45 (VNDVL) is required for PRKAR2A interaction; contributes to a protective effect against H(2)O(2)-induced apoptosis. Residues 115-139 (SPAYREAFGNALLQRLEALKRDGQS) form an interaction with GSK3B and acts as a GSK3B inhibitor region.

Belongs to the GSKIP family. Forms a complex composed of PRKAR2A or PRKAR2B, GSK3B and GSKIP through GSKIP interaction; facilitates PKA-induced phosphorylation of GSK3B leading to GSK3B inactivation; recruits DNM1L through GSK3B for PKA-mediated phosphorylation of DNM1L; promotes beta-catenin degradation through GSK3B-induced phosphorylation of beta-catenin; stabilizes beta-catenin and enhances Wnt-induced signaling through PKA-induced phosphorylation of beta-catenin. Interacts with GSK3B; induces GSK3B-mediated phosphorylation of GSKIP and inhibits GSK3B kinase activity. Post-translationally, phosphorylated by GSK3B.

It localises to the cytoplasm. The protein localises to the nucleus. Functionally, A-kinase anchoring protein for GSK3B and PKA that regulates or facilitates their kinase activity towards their targets. The ternary complex enhances Wnt-induced signaling by facilitating the GSK3B- and PKA-induced phosphorylation of beta-catenin leading to beta-catenin degradation and stabilization respectively. Upon cAMP activation, the ternary complex contributes to neuroprotection against oxidative stress-induced apoptosis by facilitating the PKA-induced phosphorylation of DML1 and PKA-induced inactivation of GSK3B. During neurite outgrowth promotes neuron proliferation; while increases beta-catenin-induced transcriptional activity through GSK3B kinase activity inhibition, reduces N-cadherin level to promote cell cycle progression. May play a role in cleft palate formation and is required for postnatal life through modulation of the activity of GSK3B during development. In Mus musculus (Mouse), this protein is GSK3B-interacting protein.